A 554-amino-acid polypeptide reads, in one-letter code: Esterase cest-33 (554 aa).

The N-myristoyl glycine moiety is linked to residue Gly2. An intrachain disulfide couples Cys76 to Cys98. Residue Ser208 is the Acyl-ester intermediate of the active site. Catalysis depends on charge relay system residues Glu331 and His446.

It belongs to the type-B carboxylesterase/lipase family.

Its subcellular location is the cytoplasm. The protein resides in the cell membrane. The catalysed reaction is a carboxylic ester + H2O = an alcohol + a carboxylate + H(+). The polypeptide is Esterase cest-33 (Caenorhabditis elegans).